The primary structure comprises 250 residues: Probable S-methyl-5'-thioinosine phosphorylase (250 aa).

Residues threonine 14 and 56–57 (RH) each bind phosphate. Methionine 189 is a binding site for substrate. Threonine 190 is a binding site for phosphate. 213–215 (NWA) lines the substrate pocket.

Belongs to the PNP/MTAP phosphorylase family. MTAP subfamily. In terms of assembly, homotrimer.

It carries out the reaction S-methyl-5'-thioinosine + phosphate = 5-(methylsulfanyl)-alpha-D-ribose 1-phosphate + hypoxanthine. Its pathway is purine metabolism; purine nucleoside salvage. Functionally, catalyzes the reversible phosphorylation of S-methyl-5'-thioinosine (MTI) to hypoxanthine and 5-methylthioribose-1-phosphate. Involved in the breakdown of S-methyl-5'-thioadenosine (MTA), a major by-product of polyamine biosynthesis. Catabolism of (MTA) occurs via deamination to MTI and phosphorolysis to hypoxanthine. The chain is Probable S-methyl-5'-thioinosine phosphorylase from Xanthomonas campestris pv. campestris (strain ATCC 33913 / DSM 3586 / NCPPB 528 / LMG 568 / P 25).